A 326-amino-acid polypeptide reads, in one-letter code: MATTERKPLLLDFEKPLAELANRIDQIRQLAEENGVDVSGEIRKLETRAMQLREEIFSTLSPSQRLQVARHPRRPSTLDYIQAISDEWMELHGDRCGGDDPALIGGVARLGGKPVVILGHQKGRDTKDNIARNFGMATPGGYRKAMRLMEHANKFSMPILTFIDTPGALPTVVAERQGAGEAIAYNLREMFSLDVPIICTVIGEGGSGGALGIGVGDRLLMFEHSVYTVATPEACAAILWKDASKSPQAAVALKIVSHDLKNLGIIDQILPEPTGGAHSDPLTAATTLKQALLDNLDELDRLTSQERRQLRYDKFRKIGVFTEVAH.

Positions Lys44–Glu298 constitute a CoA carboxyltransferase C-terminal domain.

This sequence belongs to the AccA family. As to quaternary structure, acetyl-CoA carboxylase is a heterohexamer composed of biotin carboxyl carrier protein (AccB), biotin carboxylase (AccC) and two subunits each of ACCase subunit alpha (AccA) and ACCase subunit beta (AccD).

The protein localises to the cytoplasm. The enzyme catalyses N(6)-carboxybiotinyl-L-lysyl-[protein] + acetyl-CoA = N(6)-biotinyl-L-lysyl-[protein] + malonyl-CoA. It participates in lipid metabolism; malonyl-CoA biosynthesis; malonyl-CoA from acetyl-CoA: step 1/1. Functionally, component of the acetyl coenzyme A carboxylase (ACC) complex. First, biotin carboxylase catalyzes the carboxylation of biotin on its carrier protein (BCCP) and then the CO(2) group is transferred by the carboxyltransferase to acetyl-CoA to form malonyl-CoA. This chain is Acetyl-coenzyme A carboxylase carboxyl transferase subunit alpha, found in Nostoc sp. (strain PCC 7120 / SAG 25.82 / UTEX 2576).